A 96-amino-acid chain; its full sequence is RNA-binding protein Hfq (96 aa).

The Sm domain maps to 9–68; the sequence is DPYLNALRRERIPVSIYLVNGIKLQGQIESFDQFVILLKNTVNQMVYKHAISTVVPARSV.

It belongs to the Hfq family. In terms of assembly, homohexamer.

In terms of biological role, RNA chaperone that binds small regulatory RNA (sRNAs) and mRNAs to facilitate mRNA translational regulation in response to envelope stress, environmental stress and changes in metabolite concentrations. Also binds with high specificity to tRNAs. The polypeptide is RNA-binding protein Hfq (Histophilus somni (strain 129Pt) (Haemophilus somnus)).